A 228-amino-acid polypeptide reads, in one-letter code: Putative adhesin RBE_1271 (228 aa).

Positions 1 to 22 are cleaved as a signal peptide; the sequence is MKKLLLIAATSATVLSSALSFA.

This Rickettsia bellii (strain RML369-C) protein is Putative adhesin RBE_1271.